The primary structure comprises 231 residues: NADH-ubiquinone oxidoreductase chain 4 (231 aa).

6 consecutive transmembrane segments (helical) span residues 1–21 (PIAGSMVLAAILLKLGGYGII), 34–54 (LFLPFMVLALWGAILANLTCL), 63–85 (IAYSSISHMGLVVAAIIIQTPWG), 89–111 (AMALMIAHGFTSSALFCLANTTY), 118–138 (ILILTRGLHNILPMATTWWLL), and 156–176 (LLIMSALFNWCPTTIIMLGLS).

This sequence belongs to the complex I subunit 4 family.

It is found in the mitochondrion membrane. It carries out the reaction a ubiquinone + NADH + 5 H(+)(in) = a ubiquinol + NAD(+) + 4 H(+)(out). In terms of biological role, core subunit of the mitochondrial membrane respiratory chain NADH dehydrogenase (Complex I) that is believed to belong to the minimal assembly required for catalysis. Complex I functions in the transfer of electrons from NADH to the respiratory chain. The immediate electron acceptor for the enzyme is believed to be ubiquinone. The chain is NADH-ubiquinone oxidoreductase chain 4 (MT-ND4) from Ovophis okinavensis (Ryukyu Island pit viper).